A 300-amino-acid polypeptide reads, in one-letter code: FeMo cofactor biosynthesis protein NifB (300 aa).

Residues 24–266 (HDKVGRVHLP…PQFRACGQCR (243 aa)) enclose the Radical SAM core domain. Positions 38, 42, and 45 each coordinate [4Fe-4S] cluster. Residues G93, T144, and I196 each contribute to the S-adenosyl-L-methionine site. Residues C262 and C265 each contribute to the [4Fe-4S] cluster site.

It belongs to the radical SAM superfamily. NifB family. As to quaternary structure, monomer. [4Fe-4S] cluster is required as a cofactor.

It participates in cofactor biosynthesis; Fe-Mo cofactor biosynthesis. In terms of biological role, involved in the biosynthesis of the iron-molybdenum cofactor (FeMo-co or M-cluster) found in the dinitrogenase enzyme of the nitrogenase complex in nitrogen-fixing microorganisms. NifB catalyzes the crucial step of radical SAM-dependent carbide insertion that occurs concomitant with the insertion of a 9th sulfur and the rearrangement/coupling of two [4Fe-4S] clusters into a [8Fe-9S-C] cluster, the precursor to the M-cluster. This chain is FeMo cofactor biosynthesis protein NifB, found in Methanocaldococcus jannaschii (strain ATCC 43067 / DSM 2661 / JAL-1 / JCM 10045 / NBRC 100440) (Methanococcus jannaschii).